The primary structure comprises 266 residues: Hemin import ATP-binding protein HmuV (266 aa).

The region spanning 12 to 248 is the ABC transporter domain; it reads LEASHLHYHV…ETLTQWYQAD (237 aa). An ATP-binding site is contributed by 44–51; it reads GPNGAGKS.

It belongs to the ABC transporter superfamily. Heme (hemin) importer (TC 3.A.1.14.5) family. In terms of assembly, the complex is composed of two ATP-binding proteins (HmuV), two transmembrane proteins (HmuU) and a solute-binding protein (HmuT).

The protein localises to the cell inner membrane. In terms of biological role, part of the ABC transporter complex HmuTUV involved in hemin import. Responsible for energy coupling to the transport system. The sequence is that of Hemin import ATP-binding protein HmuV from Yersinia pestis bv. Antiqua (strain Antiqua).